Reading from the N-terminus, the 732-residue chain is Photosystem I P700 chlorophyll a apoprotein A1 (732 aa).

8 helical membrane passes run 61 to 84, 145 to 168, 185 to 209, 278 to 296, 317 to 340, 356 to 382, 414 to 436, and 510 to 528; these read VFSSGLAHFSIVFFWLGGMHFHGA, LKYAAAAALIGSIATLWAAYFHMH, NAGQLAILAGLGSISWAGHQIHIAL, IASHHFFVGITCIISGIIA, WHSRLSINLAIAGSLSITFAHHIY, LSLFVHHMWIGGFFIVGAGAHASIFMI, IIMGHLIYVTIALGMHAFGIYIH, and FMVHHIHAFTIHCTLLILM. Residues cysteine 552 and cysteine 561 each contribute to the [4Fe-4S] cluster site. Transmembrane regions (helical) follow at residues 568 to 589 and 644 to 666; these read HVFLGVFWMYNSLSIVIFHFFW and LSGYGLIFLGAHFTWAFSLMFLW. Histidine 655 is a binding site for chlorophyll a'. Chlorophyll a contacts are provided by methionine 663 and tyrosine 671. Tryptophan 672 provides a ligand contact to phylloquinone. The helical transmembrane segment at 704-724 threads the bilayer; it reads AVGLVHYMLGGIGTTWAFFLA.

This sequence belongs to the PsaA/PsaB family. The PsaA/B heterodimer binds the P700 chlorophyll special pair and subsequent electron acceptors. PSI consists of a core antenna complex that captures photons, and an electron transfer chain that converts photonic excitation into a charge separation. The eukaryotic PSI reaction center is composed of at least 11 subunits. P700 is a chlorophyll a/chlorophyll a' dimer, A0 is one or more chlorophyll a, A1 is one or both phylloquinones and FX is a shared 4Fe-4S iron-sulfur center. is required as a cofactor.

The protein resides in the plastid. Its subcellular location is the chloroplast thylakoid membrane. The enzyme catalyses reduced [plastocyanin] + hnu + oxidized [2Fe-2S]-[ferredoxin] = oxidized [plastocyanin] + reduced [2Fe-2S]-[ferredoxin]. In terms of biological role, psaA and PsaB bind P700, the primary electron donor of photosystem I (PSI), as well as the electron acceptors A0, A1 and FX. PSI is a plastocyanin/cytochrome c6-ferredoxin oxidoreductase, converting photonic excitation into a charge separation, which transfers an electron from the donor P700 chlorophyll pair to the spectroscopically characterized acceptors A0, A1, FX, FA and FB in turn. Oxidized P700 is reduced on the lumenal side of the thylakoid membrane by plastocyanin or cytochrome c6. This chain is Photosystem I P700 chlorophyll a apoprotein A1, found in Heterocapsa triquetra (Dinoflagellate).